Reading from the N-terminus, the 774-residue chain is MERPLCSHLCSCLAMLALLSPLSLAQYDSWPHYPEYFQQPAPEYHQPQAPANVAKIQLRLAGQKRKHSEGRVEVYYDGQWGTVCDDDFSIHAAHVVCRELGYVEAKSWTASSSYGKGEGPIWLDNLHCTGNEATLAACTSNGWGVTDCKHTEDVGVVCSDKRIPGFKFDNSLINQIENLNIQVEDIRIRAILSTYRKRTPVMEGYVEVKEGKTWKQICDKHWTAKNSRVVCGMFGFPGERTYNTKVYKMFASRRKQRYWPFSMDCTGTEAHISSCKLGPQVSLDPMKNVTCENGLPAVVSCVPGQVFSPDGPSRFRKAYKPEQPLVRLRGGAYIGEGRVEVLKNGEWGTVCDDKWDLVSASVVCRELGFGSAKEAVTGSRLGQGIGPIHLNEIQCTGNEKSIIDCKFNAESQGCNHEEDAGVRCNTPAMGLQKKLRLNGGRNPYEGRVEVLVERNGSLVWGMVCGQNWGIVEAMVVCRQLGLGFASNAFQETWYWHGDVNSNKVVMSGVKCSGTELSLAHCRHDGEDVACPQGGVQYGAGVACSETAPDLVLNAEMVQQTTYLEDRPMFMLQCAMEENCLSASAAQTDPTTGYRRLLRFSSQIHNNGQSDFRPKNGRHAWIWHDCHRHYHSMEVFTHYDLLNLNGTKVAEGHKASFCLEDTECEGDIQKNYECANFGDQGITMGCWDMYRHDIDCQWVDITDVPPGDYLFQVVINPNFEVAESDYSNNIMKCRSRYDGHRIWMYNCHIGGSFSEETEKKFEHFSGLLNNQLSPQ.

Residues 1–25 (MERPLCSHLCSCLAMLALLSPLSLA) form the signal peptide. SRCR domains are found at residues 58–159 (LRLA…VVCS), 188–302 (IRAI…VSCV), 326–425 (VRLR…VRCN), and 435–544 (LRLN…VACS). 9 disulfide bridges follow: C84-C148, C97-C158, C128-C138, C218-C291, C231-C301, C265-C275, C351-C414, C364-C424, and C395-C405. A glycan (N-linked (GlcNAc...) asparagine) is linked at N288. N455 is a glycosylation site (N-linked (GlcNAc...) (complex) asparagine). 3 disulfides stabilise this stretch: C464–C530, C477–C543, and C511–C521. The tract at residues 548-751 (PDLVLNAEMV…WMYNCHIGGS (204 aa)) is lysyl-oxidase like. Residues D549 and L550 each contribute to the Ca(2+) site. Intrachain disulfides connect C573–C625, C579–C695, C657–C673, and C663–C685. H626, H628, and H630 together coordinate Cu cation. Residue N644 is glycosylated (N-linked (GlcNAc...) (complex) asparagine). Positions 653–689 (KASFCLEDTECEGDIQKNYECANFGDQGITMGCWDMY) form a cross-link, lysine tyrosylquinone (Lys-Tyr). 2',4',5'-topaquinone is present on Y689. E722, D724, N727, and N728 together coordinate Ca(2+). A disulfide bridge links C732 with C746.

This sequence belongs to the lysyl oxidase family. Component of some chromatin repressor complex. Interacts with SNAI1. Interacts with TAF10. Interacts with HSPA5. Interacts with EFEMP2. Cu cation serves as cofactor. It depends on lysine tyrosylquinone residue as a cofactor. Post-translationally, the lysine tyrosylquinone cross-link (LTQ) is generated by condensation of the epsilon-amino group of a lysine with a topaquinone produced by oxidation of tyrosine. In terms of processing, N-glycosylated. N-glycosylation on Asn-455 and Asn-644 may be essential for proper folding and secretion; may be composed of a fucosylated carbohydrates attached to a trimannose N-linked glycan core. Expressed in many tissues. Highest expression in reproductive tissues, placenta, uterus and prostate. In esophageal epithelium, expressed in the basal, prickle and granular cell layers. Up-regulated in a number of cancers cells and tissues.

It localises to the secreted. It is found in the extracellular space. The protein localises to the extracellular matrix. Its subcellular location is the basement membrane. The protein resides in the nucleus. It localises to the chromosome. It is found in the endoplasmic reticulum. It carries out the reaction L-lysyl-[protein] + O2 + H2O = (S)-2-amino-6-oxohexanoyl-[protein] + H2O2 + NH4(+). Its activity is regulated as follows. According to some reports, it is inhibited by beta-aminopropionitrile (BAPN). According to another report, it is not inhibited by beta-aminopropionitrile (BAPN). Specifically inhibited by a mouse monoclonal antibody AB0023, inhibition occurs in a non-competitive manner. Functionally, mediates the post-translational oxidative deamination of lysine residues on target proteins leading to the formation of deaminated lysine (allysine). Acts as a transcription corepressor and specifically mediates deamination of trimethylated 'Lys-4' of histone H3 (H3K4me3), a specific tag for epigenetic transcriptional activation. Shows no activity against histone H3 when it is trimethylated on 'Lys-9' (H3K9me3) or 'Lys-27' (H3K27me3) or when 'Lys-4' is monomethylated (H3K4me1) or dimethylated (H3K4me2). Also mediates deamination of methylated TAF10, a member of the transcription factor IID (TFIID) complex, which induces release of TAF10 from promoters, leading to inhibition of TFIID-dependent transcription. LOXL2-mediated deamination of TAF10 results in transcriptional repression of genes required for embryonic stem cell pluripotency including POU5F1/OCT4, NANOG, KLF4 and SOX2. Involved in epithelial to mesenchymal transition (EMT) via interaction with SNAI1 and participates in repression of E-cadherin CDH1, probably by mediating deamination of histone H3. During EMT, involved with SNAI1 in negatively regulating pericentromeric heterochromatin transcription. SNAI1 recruits LOXL2 to pericentromeric regions to oxidize histone H3 and repress transcription which leads to release of heterochromatin component CBX5/HP1A, enabling chromatin reorganization and acquisition of mesenchymal traits. Interacts with the endoplasmic reticulum protein HSPA5 which activates the IRE1-XBP1 pathway of the unfolded protein response, leading to expression of several transcription factors involved in EMT and subsequent EMT induction. Involved in E-cadherin repression following hypoxia, a hallmark of EMT believed to amplify tumor aggressiveness, suggesting that it may play a role in tumor progression. When secreted into the extracellular matrix, promotes cross-linking of extracellular matrix proteins by mediating oxidative deamination of peptidyl lysine residues in precursors to fibrous collagen and elastin. Acts as a regulator of sprouting angiogenesis, probably via collagen IV scaffolding. Acts as a regulator of chondrocyte differentiation, probably by regulating expression of factors that control chondrocyte differentiation. In Homo sapiens (Human), this protein is Lysyl oxidase homolog 2 (LOXL2).